Consider the following 204-residue polypeptide: Dephospho-CoA kinase (204 aa).

A DPCK domain is found at 13 to 204; it reads RIGLTGGIAS…LWKNTIKKLV (192 aa). An ATP-binding site is contributed by 21–26; the sequence is ASGKST.

Belongs to the CoaE family.

The protein localises to the cytoplasm. It catalyses the reaction 3'-dephospho-CoA + ATP = ADP + CoA + H(+). The protein operates within cofactor biosynthesis; coenzyme A biosynthesis; CoA from (R)-pantothenate: step 5/5. Its function is as follows. Catalyzes the phosphorylation of the 3'-hydroxyl group of dephosphocoenzyme A to form coenzyme A. This is Dephospho-CoA kinase from Prochlorococcus marinus subsp. pastoris (strain CCMP1986 / NIES-2087 / MED4).